The chain runs to 502 residues: Cytochrome P450 monooxygenase prhN (502 aa).

A helical transmembrane segment spans residues 14–30; it reads SGALLIVGILLLRWALW. The N-linked (GlcNAc...) asparagine glycan is linked to Asn165. Cys443 contacts heme. A glycan (N-linked (GlcNAc...) asparagine) is linked at Asn474.

It belongs to the cytochrome P450 family. Heme serves as cofactor.

Its subcellular location is the membrane. It functions in the pathway secondary metabolite biosynthesis; terpenoid biosynthesis. In terms of biological role, cytochrome P450 monooxygenase; part of the gene cluster that mediates the biosynthesis of paraherquonin, a meroterpenoid with a unique, highly congested hexacyclic molecular architecture. The first step of the pathway is the synthesis of 3,5-dimethylorsellinic acid (DMOA) by the polyketide synthase prhL. Synthesis of DMOA is followed by farnesylation by the prenyltransferase prhE, methylesterification by the methyl-transferase prhM, epoxidation of the prenyl chain by the flavin-dependent monooxygenase prhF, and cyclization of the farnesyl moiety by the terpene cyclase prhH, to yield the tetracyclic intermediate, protoaustinoid A. The short chain dehydrogenase prhI then oxidizes the C-3 alcohol group of the terpene cyclase product to transform protoaustinoid A into protoaustinoid B. The FAD-binding monooxygenase prhJ catalyzes the oxidation of protoaustinoid B into preaustinoid A which is further oxidized into preaustinoid A1 by FAD-binding monooxygenase phrK. Finally, prhA leads to berkeleydione via the berkeleyone B intermediate. PrhA is a multifunctional dioxygenase that first desaturates at C5-C6 to form berkeleyone B, followed by rearrangement of the A/B-ring to form the cycloheptadiene moiety in berkeleydione. Berkeleydione serves as the key intermediate for the biosynthesis of paraherquonin as well as many other meroterpenoids. The cytochrome P450 monooxygenases prhB, prhD, and prhN, as well as the isomerase prhC, are probably involved in the late stage of paraherquonin biosynthesis, after the production of berkeleydione. Especially prhC might be a multifunctional enzyme that catalyzes the D-ring expansion via intramolecular methoxy rearrangement, as well as the hydrolysis of the expanded D-ring. The polypeptide is Cytochrome P450 monooxygenase prhN (Penicillium brasilianum).